The following is a 315-amino-acid chain: Homoserine kinase (315 aa).

97–107 contacts ATP; that stretch reads PPARGLGSSAT.

This sequence belongs to the GHMP kinase family. Homoserine kinase subfamily.

It is found in the cytoplasm. The catalysed reaction is L-homoserine + ATP = O-phospho-L-homoserine + ADP + H(+). Its pathway is amino-acid biosynthesis; L-threonine biosynthesis; L-threonine from L-aspartate: step 4/5. In terms of biological role, catalyzes the ATP-dependent phosphorylation of L-homoserine to L-homoserine phosphate. The sequence is that of Homoserine kinase from Synechococcus sp. (strain CC9902).